The following is a 429-amino-acid chain: 5-methylthioadenosine/S-adenosylhomocysteine deaminase (429 aa).

Residues H65 and H67 each contribute to the Zn(2+) site. Residues E94 and H182 each coordinate substrate. Position 209 (H209) interacts with Zn(2+). Substrate-binding residues include E212 and D297. D297 provides a ligand contact to Zn(2+).

It belongs to the metallo-dependent hydrolases superfamily. MTA/SAH deaminase family. Zn(2+) serves as cofactor.

It catalyses the reaction S-adenosyl-L-homocysteine + H2O + H(+) = S-inosyl-L-homocysteine + NH4(+). The enzyme catalyses S-methyl-5'-thioadenosine + H2O + H(+) = S-methyl-5'-thioinosine + NH4(+). In terms of biological role, catalyzes the deamination of 5-methylthioadenosine and S-adenosyl-L-homocysteine into 5-methylthioinosine and S-inosyl-L-homocysteine, respectively. Is also able to deaminate adenosine. This is 5-methylthioadenosine/S-adenosylhomocysteine deaminase from Clostridium tetani (strain Massachusetts / E88).